Here is a 346-residue protein sequence, read N- to C-terminus: Putative [LysW]-L-2-aminoadipate/[LysW]-L-glutamate phosphate reductase (346 aa).

Position 12–15 (12–15 (SGFT)) interacts with NADP(+). The active site involves Cys147. Residues 178–198 (GSSEGGAGGGDASSHPERSGV) are disordered. Residue Asn310 participates in NADP(+) binding.

The protein belongs to the NAGSA dehydrogenase family. Type 1 subfamily. LysY sub-subfamily.

The protein resides in the cytoplasm. It carries out the reaction [amino-group carrier protein]-C-terminal-N-(1-carboxy-5-oxopentan-1-yl)-L-glutamine + phosphate + NADP(+) = [amino-group carrier protein]-C-terminal-N-(1-carboxy-5-phosphooxy-5-oxopentan-1-yl)-L-glutamine + NADPH + H(+). The enzyme catalyses [amino-group carrier protein]-C-terminal-gamma-(L-glutamyl-5-semialdehyde)-L-glutamate + phosphate + NADP(+) = [amino-group carrier protein]-C-terminal-gamma-(5-phospho-L-glutamyl)-L-glutamate + NADPH + H(+). It participates in amino-acid biosynthesis; L-lysine biosynthesis via AAA pathway; L-lysine from L-alpha-aminoadipate (Thermus route): step 3/5. It functions in the pathway amino-acid biosynthesis; L-arginine biosynthesis. Functionally, involved in both the arginine and lysine biosynthetic pathways. This is Putative [LysW]-L-2-aminoadipate/[LysW]-L-glutamate phosphate reductase from Haloquadratum walsbyi (strain DSM 16790 / HBSQ001).